The following is a 309-amino-acid chain: Probable manganese-dependent inorganic pyrophosphatase (309 aa).

Mn(2+)-binding residues include histidine 9, aspartate 13, aspartate 15, aspartate 75, histidine 97, and aspartate 149.

Belongs to the PPase class C family. Requires Mn(2+) as cofactor.

It localises to the cytoplasm. It catalyses the reaction diphosphate + H2O = 2 phosphate + H(+). The sequence is that of Probable manganese-dependent inorganic pyrophosphatase from Bacillus anthracis (strain CDC 684 / NRRL 3495).